An 879-amino-acid polypeptide reads, in one-letter code: MAYRKRGARREANLNNNDRMQEKNDEKQDSNKIQLSDKVLSKKEEIVTDSHEEVKITDEVKKSTKEESKQLLEVLKTKEEHQKEIQYEILQKTIPTFEPKETILKKLEDIKPELAKKQTKLFRIFEPKQLPIYRANGERELRNRWCWKLKKDTLPDGDYDVREYFLNLYDQVLTEMPDYLLLKDMAVENKNSRDAGKVVDSETASICDAIFQDEETEGAVRRFIAEMRQRVQADRNVVNYPSILHPIDYAFNEYFLQHQLVEPLNNDIIFNYIPERIRNDVNYILNMDRNLPSTARYIRPNLLQDRLNLHDNFESLWDTITTSNYILARSIVPDLKELVSTEAQIQKMSQDLQLEALTIQSETQFLTGINSQAANDCFKTLIAAMLSQRTMSLDFVTTNYMSLISGMWLLTVIPNDMFIRESLVACQLAIVNTIIYPAFGMQRMHYRNGDPQTPFQIAEQQIQNFQVANWLHFVNNNQFRQAVIDGVLNQVLNDNIRSGHVINQLMEALMQLSRQQFPTMPVDYKRSIQRGILLLSNRLGQLVDLTRLLAYNYETLMACITMNMQHVQTLTTEKLQLTSVTSLCMLIGNATVIPSPQTLFHYYNVNVNFHSNYNERINDAVAIITAANRLNLYQKKMKAIVEDFLKRLYIFDVSRVPDDQMYRLRDRLRLLPVEIRRLDIFNLILMNMDQIERASDKIAQGVIIAYRDMHLERDEMYGYVNIARNLDGFQQINLEELMRSGDYAQITNMLLNNQPVALVGALPFITDSSVISLIAKLDATVFAQIVKLRKVDTLKPILYKINSDSNDFYLVANYDWVPTSTTKVYKQVPQQFDFRNSMHMLTSNLTFTVYSDLLAFVSADTVEPINAVAFDNMRIMNEL.

Positions 1-35 (MAYRKRGARREANLNNNDRMQEKNDEKQDSNKIQL) are disordered. The tract at residues 1–79 (MAYRKRGARR…QLLEVLKTKE (79 aa)) is 5-fold hub; involved in the encapsidation of VP1 and VP3. The segment covering 19-30 (RMQEKNDEKQDS) has biased composition (basic and acidic residues). Hydrophobic regions lie at residues 393 to 413 (LDFVTTNYMSLISGMWLLTVI) and 421 to 441 (ESLVACQLAIVNTIIYPAFGM).

It belongs to the rotavirus VP2 family. Homodecamer; each decamer is made up of two conformers of VP2, called VP2A and VP2B. Interacts with a VP1-VP3 complex. Interacts with the intermediate capsid protein VP6. Interacts with NSP5. Interacts (via N-terminus) with NSP2. Post-translationally, sumoylated with SUMO1 and SUMO2. Sumoylation of viral proteins seems to have a positive role on viral replication.

The protein resides in the virion. In terms of biological role, inner capsid protein that self-assembles to form an icosahedral capsid with a T=2 symmetry, which consists of 120 copies of VP2, with channels at each of its five-fold vertices. This capsid constitutes the innermost concentric layer of the viral mature particle. It encapsidates the polymerase VP1, the capping enzyme VP3 and the genomic dsRNA, thereby defining the core. The innermost VP2 capsid and the intermediate VP6 capsid remain intact following cell entry to protect the dsRNA from degradation and to prevent unfavorable antiviral responses in the host cell during all the replication cycle of the virus. Nascent transcripts are transcribed within the structural confines of this double-layered particle (DLP) and are extruded through the channels formed by VP2 N-termini. VP2 is required for the replicase activity of VP1 polymerase. Probably recruits a copy of a VP1-VP3 complex, potentially along with a segment of plus-strand RNA, as a decamer of VP2 assembles. May activate the autoinhibited VP1/RNA complex to coordinate packaging and genome replication. The protein is Inner capsid protein VP2 of Rotavirus A (strain RVA/Human/United States/DS-1/1976/G2P1B[4]) (RV-A).